We begin with the raw amino-acid sequence, 206 residues long: Transmembrane emp24 domain-containing protein bai (206 aa).

An N-terminal signal peptide occupies residues 1 to 20; it reads MLKVLYVIFTIFGYIWPIYS. At 21 to 172 the chain is on the lumenal side; that stretch reads VMFHLTPNTQ…RDTNEKTNSR (152 aa). Residues 30-140 form the GOLD domain; it reads QKCLKEDIQA…LKPLEVDLKR (111 aa). Residues 173–193 form a helical membrane-spanning segment; it reads VLFFSIFSMCCLLGLATWQVL. Topologically, residues 194–206 are cytoplasmic; sequence YLRRYFKAKKLIE.

The protein belongs to the EMP24/GP25L family.

Its subcellular location is the membrane. In terms of biological role, eca and bai are essential, though not redundant, for dorsoventral patterning of the embryo. Specifically required during early embryogenesis for the activity of maternal tkv, while the zygotic tkv is not affected. In Drosophila virilis (Fruit fly), this protein is Transmembrane emp24 domain-containing protein bai.